The following is a 347-amino-acid chain: MNPLIFSTILATIIMGTAIVMTSSHWLTIWIGFEMNMLAIIPMLMKQHNPRSTEAATKYFLTQATASMLLMLAVIMNLTHTGQWTITKSFNPLASIIMTIALTMKLGLSPFHFWVPEVAQGIPLSSCLILLTWQKLAPLSILYMISPTINLNLLLSMSLISVAIGGWGGLNQTQLRKIMAYSSIAHMGWMTAILAYNPTMTMLNLLVYITMTTTMFMLLIKSASTTTLSLAIMWNKVPLVTTLTLTIMLSLGGLPPLTGFLPKWMIIQELTKNNNIIMPTLMAIMALLSLYFYMRLTYATTLTMFPTTNNMKMKWQFEPKKHMNLLSPLIVMSTLTLPLAPMMSLLD.

11 consecutive transmembrane segments (helical) span residues M1–M21, H25–M45, Y59–T79, I96–P116, C127–P147, I149–G169, I178–P198, M200–I220, I247–I267, I276–L296, and L325–L345.

The protein belongs to the complex I subunit 2 family. As to quaternary structure, core subunit of respiratory chain NADH dehydrogenase (Complex I) which is composed of 45 different subunits. Interacts with TMEM242.

It is found in the mitochondrion inner membrane. It catalyses the reaction a ubiquinone + NADH + 5 H(+)(in) = a ubiquinol + NAD(+) + 4 H(+)(out). Functionally, core subunit of the mitochondrial membrane respiratory chain NADH dehydrogenase (Complex I) which catalyzes electron transfer from NADH through the respiratory chain, using ubiquinone as an electron acceptor. Essential for the catalytic activity and assembly of complex I. This Natalus stramineus (Mexican funnel-eared bat) protein is NADH-ubiquinone oxidoreductase chain 2.